A 204-amino-acid polypeptide reads, in one-letter code: MGNASVAVGTAVGIPIAVGVIIALIFWCKLQRRYKKEEIRDADLEKMVMEEVAVSVYDGFKAEINSSSEASTINEKEANQDLKPCQEKTAKAGYTPAYRRQLNASMGTLRPKKQSTAYINVPVIFSGEKVNYGMVRDPSYSFMYPLTLSRKETSSLRSASTSNLSSSTENTALHEEIKLDDPYENDFTNYTVNKREFIDSLRPR.

A helical membrane pass occupies residues 6-26; the sequence is VAVGTAVGIPIAVGVIIALIF.

The protein belongs to the SKG1 family.

The protein localises to the vacuole membrane. Its function is as follows. Involved in cell cycle progression and surviving DNA damage. This chain is Altered inheritance of mitochondria protein 20 (AIM20), found in Saccharomyces cerevisiae (strain RM11-1a) (Baker's yeast).